A 108-amino-acid polypeptide reads, in one-letter code: uncharacterized protein (108 aa).

Residues 1 to 24 form the signal peptide; it reads MNLWEFRFGKSFLFIPNFIMKVLA.

To M.jannaschii MJ0803.

This is an uncharacterized protein from Methanocaldococcus jannaschii (strain ATCC 43067 / DSM 2661 / JAL-1 / JCM 10045 / NBRC 100440) (Methanococcus jannaschii).